Reading from the N-terminus, the 116-residue chain is S-adenosylmethionine decarboxylase proenzyme (116 aa).

Residue S63 is the Schiff-base intermediate with substrate; via pyruvic acid of the active site. S63 carries the pyruvic acid (Ser); by autocatalysis modification. H68 serves as the catalytic Proton acceptor; for processing activity. C83 serves as the catalytic Proton donor; for catalytic activity.

This sequence belongs to the prokaryotic AdoMetDC family. Type 1 subfamily. Heterotetramer of two alpha and two beta chains arranged as a dimer of alpha/beta heterodimers. It depends on pyruvate as a cofactor. Is synthesized initially as an inactive proenzyme. Formation of the active enzyme involves a self-maturation process in which the active site pyruvoyl group is generated from an internal serine residue via an autocatalytic post-translational modification. Two non-identical subunits are generated from the proenzyme in this reaction, and the pyruvate is formed at the N-terminus of the alpha chain, which is derived from the carboxyl end of the proenzyme. The post-translation cleavage follows an unusual pathway, termed non-hydrolytic serinolysis, in which the side chain hydroxyl group of the serine supplies its oxygen atom to form the C-terminus of the beta chain, while the remainder of the serine residue undergoes an oxidative deamination to produce ammonia and the pyruvoyl group blocking the N-terminus of the alpha chain.

It carries out the reaction S-adenosyl-L-methionine + H(+) = S-adenosyl 3-(methylsulfanyl)propylamine + CO2. The protein operates within amine and polyamine biosynthesis; S-adenosylmethioninamine biosynthesis; S-adenosylmethioninamine from S-adenosyl-L-methionine: step 1/1. Its function is as follows. Catalyzes the decarboxylation of S-adenosylmethionine to S-adenosylmethioninamine (dcAdoMet), the propylamine donor required for the synthesis of the polyamines spermine and spermidine from the diamine putrescine. This is S-adenosylmethionine decarboxylase proenzyme from Clostridium botulinum (strain ATCC 19397 / Type A).